A 155-amino-acid polypeptide reads, in one-letter code: Interleukin-2 (155 aa).

An N-terminal signal peptide occupies residues Met1–Ser20. Residue Thr23 is glycosylated (O-linked (GalNAc...) threonine). Cys77 and Cys125 are disulfide-bonded.

The protein belongs to the IL-2 family.

It is found in the secreted. Functionally, cytokine produced by activated CD4-positive helper T-cells and to a lesser extend activated CD8-positive T-cells and natural killer (NK) cells that plays pivotal roles in the immune response and tolerance. Binds to a receptor complex composed of either the high-affinity trimeric IL-2R (IL2RA/CD25, IL2RB/CD122 and IL2RG/CD132) or the low-affinity dimeric IL-2R (IL2RB and IL2RG). Interaction with the receptor leads to oligomerization and conformation changes in the IL-2R subunits resulting in downstream signaling starting with phosphorylation of JAK1 and JAK3. In turn, JAK1 and JAK3 phosphorylate the receptor to form a docking site leading to the phosphorylation of several substrates including STAT5. This process leads to activation of several pathways including STAT, phosphoinositide-3-kinase/PI3K and mitogen-activated protein kinase/MAPK pathways. Functions as a T-cell growth factor and can increase NK-cell cytolytic activity as well. Promotes strong proliferation of activated B-cells and subsequently immunoglobulin production. Plays a pivotal role in regulating the adaptive immune system by controlling the survival and proliferation of regulatory T-cells, which are required for the maintenance of immune tolerance. Moreover, participates in the differentiation and homeostasis of effector T-cell subsets, including Th1, Th2, Th17 as well as memory CD8-positive T-cells. In Dasypus novemcinctus (Nine-banded armadillo), this protein is Interleukin-2 (IL2).